The primary structure comprises 337 residues: MAQEKDCRIVFMGTPGFAAASLRRLAAWPRAHIVAVYTQPDRPAGRGQKLAMSAVKKLALELGIPVCQPASLKGAEAQAELAAFRPDVLAVAAYGLILPDAVLDMPRLAPVNVHASILPGLRGAAPIQRAVMEGWQPGARAGISIMRIGSRLDAGPVYAMGDTPIGEHTSGSLHDALAELGAELLVTVLDDLMEGRAVAVEQDESLATHAAKLGKRDGYINWTRSAAEAHAQIRGVTPRPGARTVLHLDAGTDFEARSMPLIVSPGTIGETAAGTAPGSVRHDGQDISIACGDCWYTLGMVRPEGRKDMPVRDLLNGSLKNLPQGVCGEARSPEESL.

116-119 is a binding site for (6S)-5,6,7,8-tetrahydrofolate; sequence SILP.

It belongs to the Fmt family.

The enzyme catalyses L-methionyl-tRNA(fMet) + (6R)-10-formyltetrahydrofolate = N-formyl-L-methionyl-tRNA(fMet) + (6S)-5,6,7,8-tetrahydrofolate + H(+). In terms of biological role, attaches a formyl group to the free amino group of methionyl-tRNA(fMet). The formyl group appears to play a dual role in the initiator identity of N-formylmethionyl-tRNA by promoting its recognition by IF2 and preventing the misappropriation of this tRNA by the elongation apparatus. In Desulfovibrio desulfuricans (strain ATCC 27774 / DSM 6949 / MB), this protein is Methionyl-tRNA formyltransferase.